A 94-amino-acid polypeptide reads, in one-letter code: Large ribosomal subunit protein uL24c (94 aa).

It belongs to the universal ribosomal protein uL24 family. In terms of assembly, part of the 50S ribosomal subunit.

It localises to the plastid. The protein resides in the chloroplast. One of two assembly initiator proteins, it binds directly to the 5'-end of the 23S rRNA, where it nucleates assembly of the 50S subunit. In Cyanidium caldarium (Red alga), this protein is Large ribosomal subunit protein uL24c (rpl24).